The sequence spans 501 residues: MDTGGNSLASGPDGVKRKVCYFYDPEVGNYYYGQGHPMKPHRIRMTHALLAHYGLLQHMQVLKPFPARDRDLCRFHADDYVSFLRSITPETQQDQIRQLKRFNVGEDCPVFDGLYSFCQTYAGGSVGGSVKLNHGLCDIAINWAGGLHHAKKCEASGFCYVNDIVLAILELLKQHERVLYVDIDIHHGDGVEEAFYATDRVMTVSFHKFGDYFPGTGHIQDIGYGSGKYYSLNVPLDDGIDDESYHLLFKPIMGKVMEIFRPGAVVLQCGADSLSGDRLGCFNLSIKGHAECVKFMRSFNVPLLLLGGGGYTIRNVARCWCYETGVALGVEVEDKMPEHEYYEYFGPDYTLHVAPSNMENKNSRQMLEEIRNDLLHNLSKLQHAPSVPFQERPPDTETPEVDEDQEDGDKRWDPDSDMDVDDDRKPIPSRVKREAVEPDTKDKDGLKGIMERGKGCEVEVDESGSTKVTGVNPVGVEEASVKMEEEGTNKGGAEQAFPPKT.

A histone deacetylase region spans residues 17–329 (RKVCYFYDPE…WCYETGVALG (313 aa)). His149 functions as the Proton donor/acceptor in the catalytic mechanism. Zn(2+) contacts are provided by Asp184, His186, and Asp272. Residues 383-501 (HAPSVPFQER…GAEQAFPPKT (119 aa)) are disordered. Over residues 397–407 (ETPEVDEDQED) the composition is skewed to acidic residues. Ser416 is modified (phosphoserine). Composition is skewed to basic and acidic residues over residues 422-457 (DDRKPIPSRVKREAVEPDTKDKDGLKGIMERGKGCE) and 479-488 (ASVKMEEEGT).

The protein belongs to the histone deacetylase family. HD type 1 subfamily. In terms of assembly, interacts with SIN3, SAP18 and TPR1. Interacts with CDKE-1, MED14 and LUG. Interacts with TPL. Interacts with AHL22. It depends on Zn(2+) as a cofactor. In terms of tissue distribution, highly expressed in leaves, stems, flowers and young siliques.

It localises to the nucleus. It catalyses the reaction N(6)-acetyl-L-lysyl-[histone] + H2O = L-lysyl-[histone] + acetate. Responsible for the deacetylation of lysine residues on the N-terminal part of the core histones (H2A, H2B, H3 and H4). Histone deacetylation gives a tag for epigenetic repression and plays an important role in transcriptional regulation, cell cycle progression and developmental events. Histone deacetylases act via the formation of large multiprotein complexes. HDA19 is involved in jasmonic acid and ethylene signaling of pathogen response. Part of a repressor complex including APETALA2 (AP2) and TOPLESS (TPL) that control the expression domains of numerous floral organ identity genes. Involved in negative regulation of salinity stress response. Represses the expression of stress tolerance-related genes, genes coding for late embryogenesis abundant (LEA) proteins that prevent protein aggregation, and positive regulators of abscisic acid (ABA) signaling, such as ABI5 and NAC019. This chain is Histone deacetylase 19, found in Arabidopsis thaliana (Mouse-ear cress).